Here is a 138-residue protein sequence, read N- to C-terminus: Small ribosomal subunit protein uS8c (138 aa).

Belongs to the universal ribosomal protein uS8 family. In terms of assembly, part of the 30S ribosomal subunit.

Its subcellular location is the plastid. The protein localises to the chloroplast. One of the primary rRNA binding proteins, it binds directly to 16S rRNA central domain where it helps coordinate assembly of the platform of the 30S subunit. The polypeptide is Small ribosomal subunit protein uS8c (rps8) (Oenothera elata subsp. hookeri (Hooker's evening primrose)).